The primary structure comprises 152 residues: Large ribosomal subunit protein uL15 (152 aa).

The disordered stretch occupies residues 1–79 (MRLNELSPPP…GRHTPAHPKV (79 aa)). The segment covering 22-35 (GEGSGYGKTSGRGQ) has biased composition (gly residues).

Belongs to the universal ribosomal protein uL15 family. As to quaternary structure, part of the 50S ribosomal subunit.

Binds to the 23S rRNA. The protein is Large ribosomal subunit protein uL15 of Rubrobacter xylanophilus (strain DSM 9941 / JCM 11954 / NBRC 16129 / PRD-1).